The primary structure comprises 119 residues: Large ribosomal subunit protein uL22 (119 aa).

It belongs to the universal ribosomal protein uL22 family. Part of the 50S ribosomal subunit.

Functionally, this protein binds specifically to 23S rRNA; its binding is stimulated by other ribosomal proteins, e.g. L4, L17, and L20. It is important during the early stages of 50S assembly. It makes multiple contacts with different domains of the 23S rRNA in the assembled 50S subunit and ribosome. Its function is as follows. The globular domain of the protein is located near the polypeptide exit tunnel on the outside of the subunit, while an extended beta-hairpin is found that lines the wall of the exit tunnel in the center of the 70S ribosome. This is Large ribosomal subunit protein uL22 from Rickettsia conorii (strain ATCC VR-613 / Malish 7).